The following is a 761-amino-acid chain: Cyclin-D-binding Myb-like transcription factor 1 (761 aa).

The segment at 1–237 is interaction with CCND2; that stretch reads MSTVEEDSDT…TPEEIEKLKE (237 aa). Positions 24–51 are disordered; it reads DTDGNLILHCPQNDPDEVDSEDSTEPPH. Residues 37–47 are compositionally biased toward acidic residues; that stretch reads DPDEVDSEDST. The tract at residues 87-170 is required for transcriptional activation; it reads VTMTATTEVA…IDILMNNIER (84 aa). The interval 87–458 is required for DNA-binding; the sequence is VTMTATTEVA…DNTAISPSPM (372 aa). Residues 176–761 are interaction with CCND1, CCND2 and CCND3; it reads GIKDATEIIF…KDVEDLVNCH (586 aa). One can recognise a Myb-like 1 domain in the interval 225–263; the sequence is GKYTPEEIEKLKELRIKHGNDWATIGAALGRSASSVKDR. The HTH myb-type domain occupies 268–333; that stretch reads KDTCNTGKWT…KWLNYLNWKQ (66 aa). The H-T-H motif DNA-binding region spans 306–329; that stretch reads WAAVAERVGTRSEKQCRSKWLNYL. Residues 339–388 enclose the Myb-like 2 domain; it reads WTKEDEINLILRIAELDVADENDINWDLLAEGWSSVRSPQWLRSKWWTIK. The required for transcriptional activation stretch occupies residues 459–761; it reads AALQIPVQIT…KDVEDLVNCH (303 aa). Disordered stretches follow at residues 584-625 and 740-761; these read SLSQ…MTIQ and GSSL…VNCH.

This sequence belongs to the DMTF1 family. In terms of assembly, interacts with the D-type cyclins CCND1, CCND2 and CCND3. Interaction with D-type cyclins may modulate transcriptional activation by this protein. Post-translationally, phosphorylated by the cyclin-D2/CDK4, cyclin-D3/CDK4 and cyclin-D2/CDK6 complexes and to a lesser extent by the cyclin-D1/CDK4 complex. Ubiquitously expressed (at mRNA level). Expressed in brain, intestine, kidney, lung, pancreas, skin, spleen and tongue (at protein level). Expressed at high levels in testis and thymus (at protein level). In all tissues examined, expression is predominant in non-proliferating and differentiated cell types. These include epithelial, interstitial and smooth muscle cells of the intestine, differentiated spermatids, sperm and interstitial cells of the testis, and lymphoid cells of the medullary compartment of the thymus.

Its subcellular location is the nucleus. Transcriptional activator which activates the CDKN2A/ARF locus in response to Ras-Raf signaling, thereby promoting p53/TP53-dependent growth arrest. May also cooperate with MYB to activate transcription of the ANPEP gene. Binds to the consensus sequence 5'-CCCG[GT]ATGT-3'. This Mus musculus (Mouse) protein is Cyclin-D-binding Myb-like transcription factor 1 (Dmtf1).